The sequence spans 126 residues: Major sperm protein 3 (126 aa).

An N-acetylalanine modification is found at A2. In terms of domain architecture, MSP spans 8–125 (DIATMPAQKV…RRKNLPIEYN (118 aa)).

Sperm.

Its subcellular location is the cell projection. It is found in the pseudopodium. The protein localises to the cytoplasm. The protein resides in the cytoskeleton. In terms of biological role, central component in molecular interactions underlying sperm crawling. Forms an extensive filament system that extends from sperm villipoda, along the leading edge of the pseudopod. This Globodera rostochiensis (Golden nematode worm) protein is Major sperm protein 3 (MSP-3).